The following is an 81-amino-acid chain: Photosystem I iron-sulfur center (81 aa).

4Fe-4S ferredoxin-type domains lie at Ser-2 to Trp-31 and Ile-39 to Ser-68. [4Fe-4S] cluster-binding residues include Cys-11, Cys-14, Cys-17, Cys-21, Cys-48, Cys-51, Cys-54, and Cys-58.

As to quaternary structure, the eukaryotic PSI reaction center is composed of at least 11 subunits. Requires [4Fe-4S] cluster as cofactor.

The protein localises to the plastid. The protein resides in the chloroplast thylakoid membrane. It carries out the reaction reduced [plastocyanin] + hnu + oxidized [2Fe-2S]-[ferredoxin] = oxidized [plastocyanin] + reduced [2Fe-2S]-[ferredoxin]. Apoprotein for the two 4Fe-4S centers FA and FB of photosystem I (PSI); essential for photochemical activity. FB is the terminal electron acceptor of PSI, donating electrons to ferredoxin. The C-terminus interacts with PsaA/B/D and helps assemble the protein into the PSI complex. Required for binding of PsaD and PsaE to PSI. PSI is a plastocyanin-ferredoxin oxidoreductase, converting photonic excitation into a charge separation, which transfers an electron from the donor P700 chlorophyll pair to the spectroscopically characterized acceptors A0, A1, FX, FA and FB in turn. The protein is Photosystem I iron-sulfur center of Daucus carota (Wild carrot).